Here is a 398-residue protein sequence, read N- to C-terminus: S-adenosylmethionine synthase (398 aa).

The disordered stretch occupies residues 1-21 (MAANRRLFTSESVTEGHPDKM). His17 contacts ATP. Asp19 provides a ligand contact to Mg(2+). Position 45 (Glu45) interacts with K(+). Residues Glu58 and Gln101 each contribute to the L-methionine site. The segment at 101 to 111 (QSADIAGGVNQ) is flexible loop. ATP contacts are provided by residues 177-179 (DGK), 244-245 (RF), Asp253, 259-260 (RK), Ala276, and Lys280. Asp253 contacts L-methionine. Position 284 (Lys284) interacts with L-methionine.

The protein belongs to the AdoMet synthase family. As to quaternary structure, homotetramer; dimer of dimers. Mg(2+) serves as cofactor. The cofactor is K(+).

The protein localises to the cytoplasm. It catalyses the reaction L-methionine + ATP + H2O = S-adenosyl-L-methionine + phosphate + diphosphate. The protein operates within amino-acid biosynthesis; S-adenosyl-L-methionine biosynthesis; S-adenosyl-L-methionine from L-methionine: step 1/1. In terms of biological role, catalyzes the formation of S-adenosylmethionine (AdoMet) from methionine and ATP. The overall synthetic reaction is composed of two sequential steps, AdoMet formation and the subsequent tripolyphosphate hydrolysis which occurs prior to release of AdoMet from the enzyme. This chain is S-adenosylmethionine synthase, found in Oceanobacillus iheyensis (strain DSM 14371 / CIP 107618 / JCM 11309 / KCTC 3954 / HTE831).